A 380-amino-acid polypeptide reads, in one-letter code: Reducing-end xylose-releasing exo-oligoxylanase Rex8A (380 aa).

Residue glutamate 70 is the Proton donor of the active site. The active-site Proton acceptor is aspartate 265.

It belongs to the glycosyl hydrolase 8 (cellulase D) family.

The enzyme catalyses Hydrolysis of (1-&gt;4)-beta-D-xylose residues from the reducing end of oligosaccharides.. It participates in glycan degradation; xylan degradation. Functionally, involved in depolymerization of xylan, a major component of the lignocellulosic substrates. Acts as an exo-oligoxylanase that efficiently hydrolyzes xylooligosaccharides, releasing xylose from their reducing ends. Hydrolyzes xylooligomers of 3 to 6 xylose units to xylose and xylobiose. Besides linear xylooligosaccharides, also hydrolyzes branched xylooligomers, such as xylooligomers decorated with 4-O-methyl-D-glucuronic acid moieties. Its proposed role is the degradation of xylooligomers produced by the activity of extracellular xylanases once they have been transported inside cells. Shows minor activity on polymeric xylan (glucuronoxylan from beechwood). Is not active on cellooligosaccharides or cellulosic substrates, or on other polysaccharides such as pectin, polygalacturonic acid, laminarin, or lichenan. The polypeptide is Reducing-end xylose-releasing exo-oligoxylanase Rex8A (Paenibacillus barcinonensis).